Reading from the N-terminus, the 557-residue chain is Cytochrome P450 monooxygenase FSL4 (557 aa).

A run of 2 helical transmembrane segments spans residues 6–26 (LWLVTVTATLSLFVWQLIFLL) and 32–52 (IVVCLIAESLFFVAWFFYWTV). 2 N-linked (GlcNAc...) asparagine glycosylation sites follow: N127 and N393. Residue C494 participates in heme binding.

It belongs to the cytochrome P450 family. The cofactor is heme.

It is found in the membrane. Its pathway is secondary metabolite biosynthesis. Functionally, cytochrome P450 monooxygenase; part of the gene cluster that mediates the biosynthesis of fusarielins F, G and H, decaketide compounds with 5 methylations and a decaline core that act as mycoestrogens as they stimulate growth of MCF-7 breast cancer cells. The initial compound in the pathway is produced by the reducing polyketide synthase FSL1. FSL1 lacks an active enoyl reductase (ER) domain and biosynthesis of fusarielins relies on the trans-acting enoyl reductase FSL5, before it is released through hydrolysis catalyzed by the thioesterase FSL2. Fusarielins F, G, and H have a C11=C12 cis double bond and is fully reduced between C10 and C11 and between C12 and C13. FSL3 can be involved in the formation of the C11=C12 cis double bond by moving a hypothetical C10=C11 or C12=C13 trans double bond to form prefusarielin. Prefusarielin is oxygenated at C15 and C16 by FSL4, resulting in fusarielin F, which subsequently is epoxidized into fusarielin G by the same enzyme. The final step in the pathway is a reduction of the carboxylic acid moiety to yield fusarielin H via a still undetermined mechanism. This chain is Cytochrome P450 monooxygenase FSL4, found in Gibberella zeae (strain ATCC MYA-4620 / CBS 123657 / FGSC 9075 / NRRL 31084 / PH-1) (Wheat head blight fungus).